Here is a 324-residue protein sequence, read N- to C-terminus: tRNA U34 carboxymethyltransferase (324 aa).

Carboxy-S-adenosyl-L-methionine contacts are provided by residues Lys91, Trp105, Lys110, Gly130, 152 to 154 (DPS), 181 to 182 (IE), Met196, Tyr200, and Arg315.

This sequence belongs to the class I-like SAM-binding methyltransferase superfamily. CmoB family. In terms of assembly, homotetramer.

It carries out the reaction carboxy-S-adenosyl-L-methionine + 5-hydroxyuridine(34) in tRNA = 5-carboxymethoxyuridine(34) in tRNA + S-adenosyl-L-homocysteine + H(+). Its function is as follows. Catalyzes carboxymethyl transfer from carboxy-S-adenosyl-L-methionine (Cx-SAM) to 5-hydroxyuridine (ho5U) to form 5-carboxymethoxyuridine (cmo5U) at position 34 in tRNAs. The polypeptide is tRNA U34 carboxymethyltransferase (Aliivibrio fischeri (strain MJ11) (Vibrio fischeri)).